Here is a 133-residue protein sequence, read N- to C-terminus: Transcription antitermination protein NusB (133 aa).

The protein belongs to the NusB family.

Its function is as follows. Involved in transcription antitermination. Required for transcription of ribosomal RNA (rRNA) genes. Binds specifically to the boxA antiterminator sequence of the ribosomal RNA (rrn) operons. This Shouchella clausii (strain KSM-K16) (Alkalihalobacillus clausii) protein is Transcription antitermination protein NusB.